The following is a 182-amino-acid chain: ATP-dependent protease subunit HslV (182 aa).

Residue Thr-10 is part of the active site. Na(+)-binding residues include Ala-166, Cys-169, and Ser-172.

This sequence belongs to the peptidase T1B family. HslV subfamily. In terms of assembly, a double ring-shaped homohexamer of HslV is capped on each side by a ring-shaped HslU homohexamer. The assembly of the HslU/HslV complex is dependent on binding of ATP.

The protein resides in the cytoplasm. The enzyme catalyses ATP-dependent cleavage of peptide bonds with broad specificity.. Its activity is regulated as follows. Allosterically activated by HslU binding. Functionally, protease subunit of a proteasome-like degradation complex believed to be a general protein degrading machinery. This is ATP-dependent protease subunit HslV from Rickettsia felis (strain ATCC VR-1525 / URRWXCal2) (Rickettsia azadi).